The sequence spans 86 residues: Large ribosomal subunit protein uL23 (86 aa).

The protein belongs to the universal ribosomal protein uL23 family. Part of the 50S ribosomal subunit. Contacts protein L29.

Binds to 23S rRNA. One of the proteins that surrounds the polypeptide exit tunnel on the outside of the ribosome. The polypeptide is Large ribosomal subunit protein uL23 (Methanobrevibacter smithii (strain ATCC 35061 / DSM 861 / OCM 144 / PS)).